The chain runs to 1447 residues: DNA-directed RNA polymerase subunit beta' (1447 aa).

Zn(2+) is bound by residues Cys-70, Cys-72, Cys-85, and Cys-88. Asp-460, Asp-462, and Asp-464 together coordinate Mg(2+). The Zn(2+) site is built by Cys-890, Cys-964, Cys-971, and Cys-974.

The protein belongs to the RNA polymerase beta' chain family. As to quaternary structure, the RNAP catalytic core consists of 2 alpha, 1 beta, 1 beta' and 1 omega subunit. When a sigma factor is associated with the core the holoenzyme is formed, which can initiate transcription. Mg(2+) serves as cofactor. Requires Zn(2+) as cofactor.

It carries out the reaction RNA(n) + a ribonucleoside 5'-triphosphate = RNA(n+1) + diphosphate. Its function is as follows. DNA-dependent RNA polymerase catalyzes the transcription of DNA into RNA using the four ribonucleoside triphosphates as substrates. This is DNA-directed RNA polymerase subunit beta' from Desulfosudis oleivorans (strain DSM 6200 / JCM 39069 / Hxd3) (Desulfococcus oleovorans).